The chain runs to 284 residues: uncharacterized protein (284 aa).

Residues asparagine 79, asparagine 102, asparagine 111, asparagine 147, asparagine 162, asparagine 174, asparagine 196, asparagine 211, asparagine 228, and asparagine 234 are each glycosylated (N-linked (GlcNAc...) asparagine; by host). A helical transmembrane segment spans residues 239-259 (AFTYGSWGVAMLLFAAVMVLV).

The protein belongs to the RL11 family.

It is found in the membrane. This is an uncharacterized protein from Human cytomegalovirus (strain AD169) (HHV-5).